We begin with the raw amino-acid sequence, 108 residues long: Small ribosomal subunit protein uS17 (108 aa).

This sequence belongs to the universal ribosomal protein uS17 family. As to quaternary structure, part of the 30S ribosomal subunit.

One of the primary rRNA binding proteins, it binds specifically to the 5'-end of 16S ribosomal RNA. The sequence is that of Small ribosomal subunit protein uS17 from Methanoregula boonei (strain DSM 21154 / JCM 14090 / 6A8).